Here is a 702-residue protein sequence, read N- to C-terminus: Amino-acid racemase (702 aa).

Residues 1-12 are Cytoplasmic-facing; sequence MKHRANGIDLFR. A helical membrane pass occupies residues 13 to 33; sequence IFAATMVVAIHTFPFQSIAPF. Residues 34-39 lie on the Extracellular side of the membrane; sequence LDEVIT. A helical membrane pass occupies residues 40-60; it reads LTVFRVAVPFFFMITGYFLLG. The Cytoplasmic segment spans residues 61–77; it reads RLSLNFSYNNNQRVKKY. A helical membrane pass occupies residues 78–98; sequence LYKIGMIYLYSILLYFPLSLL. The Extracellular segment spans residues 99–120; it reads NGTISLKMNILLLLKVFIFDGT. Residues 121-141 traverse the membrane as a helical segment; that stretch reads FYHLWYFPASIIGTILVTLLL. A topological domain (cytoplasmic) is located at residue Arg142. The chain crosses the membrane as a helical span at residues 143-163; the sequence is SIGFKLTVAFSTCLYLVGLGG. Over 164-191 the chain is Extracellular; that stretch reads DSWYGITNQVPLLNKLYTFIFSWSDYTR. The chain crosses the membrane as a helical span at residues 192–212; sequence SGVFFTPVFLCLGIFAYRVSK. Topologically, residues 213 to 218 are cytoplasmic; sequence KLTASK. A helical membrane pass occupies residues 219–239; it reads ILNLLFYVFIIGMTFESIFLH. The Extracellular portion of the chain corresponds to 240-248; it reads RFTNVKHDS. The chain crosses the membrane as a helical span at residues 249–269; sequence MYLLLPSCALILFLMLLNWQP. Over 270–276 the chain is Cytoplasmic; that stretch reads KLKVKES. Residues 277–297 form a helical membrane-spanning segment; the sequence is ADLTLLVYILHPLVIVIVHSI. Residues 298–307 are Extracellular-facing; sequence SKYIPILKNS. Residues 308–328 traverse the membrane as a helical segment; it reads LLNFLLVVVCSFILAQLLLNL. At 329–702 the chain is on the cytoplasmic side; the sequence is KRKLRVSKQK…LGSRLGTELN (374 aa). The tract at residues 337–702 is racemase; sequence QKIPFERASK…LGSRLGTELN (366 aa). Lys375 (proton acceptor) is an active-site residue. Lys375 is subject to N6-(pyridoxal phosphate)lysine. Arg469 contacts substrate. The Proton acceptor role is filled by Tyr601. Residue Met650 coordinates substrate.

This sequence in the N-terminal section; belongs to the acyltransferase 3 family. In the C-terminal section; belongs to the alanine racemase family. The cofactor is pyridoxal 5'-phosphate.

It localises to the cell membrane. The polypeptide is Amino-acid racemase (vanTE) (Enterococcus faecalis (Streptococcus faecalis)).